Reading from the N-terminus, the 1076-residue chain is Bifunctional glutamine synthetase adenylyltransferase/adenylyl-removing enzyme (1076 aa).

Residues 1-521 (MESSIFKPSS…LHLDIYYRPM (521 aa)) are adenylyl removase. The segment at 524-1076 (VNAQMENDQI…LERNRRRAQR (553 aa)) is adenylyl transferase. The span at 1042–1056 (TATASAATQQPQTAP) shows a compositional bias: low complexity. The tract at residues 1042-1076 (TATASAATQQPQTAPRPRMHVIAPRLERNRRRAQR) is disordered.

It belongs to the GlnE family. Requires Mg(2+) as cofactor.

The enzyme catalyses [glutamine synthetase]-O(4)-(5'-adenylyl)-L-tyrosine + phosphate = [glutamine synthetase]-L-tyrosine + ADP. It catalyses the reaction [glutamine synthetase]-L-tyrosine + ATP = [glutamine synthetase]-O(4)-(5'-adenylyl)-L-tyrosine + diphosphate. Involved in the regulation of glutamine synthetase GlnA, a key enzyme in the process to assimilate ammonia. When cellular nitrogen levels are high, the C-terminal adenylyl transferase (AT) inactivates GlnA by covalent transfer of an adenylyl group from ATP to specific tyrosine residue of GlnA, thus reducing its activity. Conversely, when nitrogen levels are low, the N-terminal adenylyl removase (AR) activates GlnA by removing the adenylyl group by phosphorolysis, increasing its activity. The regulatory region of GlnE binds the signal transduction protein PII (GlnB) which indicates the nitrogen status of the cell. The sequence is that of Bifunctional glutamine synthetase adenylyltransferase/adenylyl-removing enzyme from Bifidobacterium longum (strain DJO10A).